The sequence spans 370 residues: Quinolinate synthase (370 aa).

His62 and Ser83 together coordinate iminosuccinate. Cys128 lines the [4Fe-4S] cluster pocket. Iminosuccinate-binding positions include 154 to 156 and Ser171; that span reads YAN. Cys215 contacts [4Fe-4S] cluster. Residues 241–243 and Thr258 contribute to the iminosuccinate site; that span reads HPE. Cys312 contributes to the [4Fe-4S] cluster binding site.

Belongs to the quinolinate synthase family. Type 1 subfamily. It depends on [4Fe-4S] cluster as a cofactor.

The protein resides in the cytoplasm. The enzyme catalyses iminosuccinate + dihydroxyacetone phosphate = quinolinate + phosphate + 2 H2O + H(+). Its pathway is cofactor biosynthesis; NAD(+) biosynthesis; quinolinate from iminoaspartate: step 1/1. Catalyzes the condensation of iminoaspartate with dihydroxyacetone phosphate to form quinolinate. In Neisseria meningitidis serogroup B (strain ATCC BAA-335 / MC58), this protein is Quinolinate synthase.